The chain runs to 257 residues: 5-keto-4-deoxy-D-glucarate aldolase (257 aa).

The active-site Proton acceptor is His51. Gln152 is a binding site for substrate. A Mg(2+)-binding site is contributed by Glu154. Substrate is bound by residues Ser179 and Asp180. Residue Asp180 coordinates Mg(2+).

This sequence belongs to the HpcH/HpaI aldolase family. KDGluc aldolase subfamily. In terms of assembly, homohexamer; trimer of dimers. The cofactor is Mg(2+).

It carries out the reaction 5-dehydro-4-deoxy-D-glucarate = 2-hydroxy-3-oxopropanoate + pyruvate. The enzyme catalyses 2-dehydro-3-deoxy-D-glucarate = 2-hydroxy-3-oxopropanoate + pyruvate. The protein operates within carbohydrate acid metabolism; galactarate degradation; D-glycerate from galactarate: step 2/3. In terms of biological role, catalyzes the reversible retro-aldol cleavage of both 5-keto-4-deoxy-D-glucarate and 2-keto-3-deoxy-D-glucarate to pyruvate and tartronic semialdehyde. This chain is 5-keto-4-deoxy-D-glucarate aldolase, found in Shigella boydii serotype 18 (strain CDC 3083-94 / BS512).